Here is a 28-residue protein sequence, read N- to C-terminus: Conotoxin Cl1.2 (28 aa).

In terms of processing, contains 2 disulfide bonds. In terms of tissue distribution, expressed by the venom duct.

It is found in the secreted. This chain is Conotoxin Cl1.2, found in Californiconus californicus (California cone).